A 208-amino-acid chain; its full sequence is Small ribosomal subunit protein uS4 (208 aa).

The 64-residue stretch at 98–161 folds into the S4 RNA-binding domain; it reads RRLDNVVYRL…KASPRIKELV (64 aa).

Belongs to the universal ribosomal protein uS4 family. Part of the 30S ribosomal subunit. Contacts protein S5. The interaction surface between S4 and S5 is involved in control of translational fidelity.

One of the primary rRNA binding proteins, it binds directly to 16S rRNA where it nucleates assembly of the body of the 30S subunit. Its function is as follows. With S5 and S12 plays an important role in translational accuracy. This chain is Small ribosomal subunit protein uS4, found in Desulforamulus reducens (strain ATCC BAA-1160 / DSM 100696 / MI-1) (Desulfotomaculum reducens).